Reading from the N-terminus, the 440-residue chain is Chromosome partition protein MukF (440 aa).

Positions 208–236 (LSETSGTLRELQDTLEAAGDKLQANLLRI) are leucine-zipper.

This sequence belongs to the MukF family. Interacts, and probably forms a ternary complex, with MukE and MukB via its C-terminal region. The complex formation is stimulated by calcium or magnesium. It is required for an interaction between MukE and MukB.

Its subcellular location is the cytoplasm. It localises to the nucleoid. Functionally, involved in chromosome condensation, segregation and cell cycle progression. May participate in facilitating chromosome segregation by condensation DNA from both sides of a centrally located replisome during cell division. Not required for mini-F plasmid partitioning. Probably acts via its interaction with MukB and MukE. Overexpression results in anucleate cells. It has a calcium binding activity. This Escherichia coli O9:H4 (strain HS) protein is Chromosome partition protein MukF.